Reading from the N-terminus, the 613-residue chain is Chaperone protein DnaK (613 aa).

Thr-173 is subject to Phosphothreonine; by autocatalysis. The disordered stretch occupies residues 577 to 613; the sequence is AKQAQAQQEGGAEGAQKADDNVVDAEYEEVNDDQEKK. Positions 597-613 are enriched in acidic residues; the sequence is NVVDAEYEEVNDDQEKK.

Belongs to the heat shock protein 70 family.

Its function is as follows. Acts as a chaperone. In Bacillus pumilus (strain SAFR-032), this protein is Chaperone protein DnaK.